The primary structure comprises 655 residues: HDA1 complex subunit 3 (655 aa).

Residues 482 to 632 (HELEVENNLK…KTMDNLENLT (151 aa)) are a coiled coil. A disordered region spans residues 635–655 (RVRTQNGNTKKKSRAKKPGNV). Over residues 643–655 (TKKKSRAKKPGNV) the composition is skewed to basic residues.

This sequence belongs to the HDA2/3 family. HDA3 subfamily. In terms of assembly, heterodimer with HDA2. Component of the HDA1 histone deacetylase complex composed of at least one HDA1 homodimer and one HDA2/HDA3 heterodimer. Interacts with HDA1 and HDA3.

The protein resides in the nucleus. Required for activity of HDA1 histone deacetylase complex. The HDA1 histone deacetylase complex is responsible for the deacetylation of lysine residues on the N-terminal part of the core histones (H2A, H2B, H3 and H4). Histone deacetylation gives a tag for epigenetic repression and plays an important role in transcriptional regulation, cell cycle progression and developmental events. The polypeptide is HDA1 complex subunit 3 (HDA3) (Saccharomyces cerevisiae (strain ATCC 204508 / S288c) (Baker's yeast)).